A 430-amino-acid chain; its full sequence is Serine--tRNA ligase (430 aa).

237–239 lines the L-serine pocket; the sequence is TAE. 268-270 contacts ATP; the sequence is RSE. Glutamate 291 contributes to the L-serine binding site. 355–358 contributes to the ATP binding site; the sequence is EISS. An L-serine-binding site is contributed by serine 391.

This sequence belongs to the class-II aminoacyl-tRNA synthetase family. Type-1 seryl-tRNA synthetase subfamily. In terms of assembly, homodimer. The tRNA molecule binds across the dimer.

The protein resides in the cytoplasm. It catalyses the reaction tRNA(Ser) + L-serine + ATP = L-seryl-tRNA(Ser) + AMP + diphosphate + H(+). The catalysed reaction is tRNA(Sec) + L-serine + ATP = L-seryl-tRNA(Sec) + AMP + diphosphate + H(+). The protein operates within aminoacyl-tRNA biosynthesis; selenocysteinyl-tRNA(Sec) biosynthesis; L-seryl-tRNA(Sec) from L-serine and tRNA(Sec): step 1/1. Catalyzes the attachment of serine to tRNA(Ser). Is also able to aminoacylate tRNA(Sec) with serine, to form the misacylated tRNA L-seryl-tRNA(Sec), which will be further converted into selenocysteinyl-tRNA(Sec). The sequence is that of Serine--tRNA ligase from Enterobacter sp. (strain 638).